A 325-amino-acid polypeptide reads, in one-letter code: Tetraacyldisaccharide 4'-kinase (325 aa).

ATP is bound at residue 55 to 62; that stretch reads TAGGNGKT.

It belongs to the LpxK family.

It carries out the reaction a lipid A disaccharide + ATP = a lipid IVA + ADP + H(+). It functions in the pathway glycolipid biosynthesis; lipid IV(A) biosynthesis; lipid IV(A) from (3R)-3-hydroxytetradecanoyl-[acyl-carrier-protein] and UDP-N-acetyl-alpha-D-glucosamine: step 6/6. In terms of biological role, transfers the gamma-phosphate of ATP to the 4'-position of a tetraacyldisaccharide 1-phosphate intermediate (termed DS-1-P) to form tetraacyldisaccharide 1,4'-bis-phosphate (lipid IVA). In Salmonella dublin (strain CT_02021853), this protein is Tetraacyldisaccharide 4'-kinase.